The following is a 161-amino-acid chain: Arginine repressor (161 aa).

This sequence belongs to the ArgR family.

It localises to the cytoplasm. Its pathway is amino-acid biosynthesis; L-arginine biosynthesis [regulation]. Its function is as follows. Regulates arginine biosynthesis genes. This chain is Arginine repressor, found in Corynebacterium aurimucosum (strain ATCC 700975 / DSM 44827 / CIP 107346 / CN-1) (Corynebacterium nigricans).